Here is a 124-residue protein sequence, read N- to C-terminus: Large ribosomal subunit protein bL12 (124 aa).

The protein belongs to the bacterial ribosomal protein bL12 family. In terms of assembly, homodimer. Part of the ribosomal stalk of the 50S ribosomal subunit. Forms a multimeric L10(L12)X complex, where L10 forms an elongated spine to which 2 to 4 L12 dimers bind in a sequential fashion. Binds GTP-bound translation factors.

In terms of biological role, forms part of the ribosomal stalk which helps the ribosome interact with GTP-bound translation factors. Is thus essential for accurate translation. This is Large ribosomal subunit protein bL12 from Phocaeicola vulgatus (strain ATCC 8482 / DSM 1447 / JCM 5826 / CCUG 4940 / NBRC 14291 / NCTC 11154) (Bacteroides vulgatus).